The following is a 354-amino-acid chain: Uroporphyrinogen decarboxylase (354 aa).

Substrate is bound by residues 27 to 31 (RQAGR), aspartate 77, tyrosine 154, threonine 209, and histidine 327.

It belongs to the uroporphyrinogen decarboxylase family. As to quaternary structure, homodimer.

It localises to the cytoplasm. It carries out the reaction uroporphyrinogen III + 4 H(+) = coproporphyrinogen III + 4 CO2. Its pathway is porphyrin-containing compound metabolism; protoporphyrin-IX biosynthesis; coproporphyrinogen-III from 5-aminolevulinate: step 4/4. Its function is as follows. Catalyzes the decarboxylation of four acetate groups of uroporphyrinogen-III to yield coproporphyrinogen-III. In Histophilus somni (strain 2336) (Haemophilus somnus), this protein is Uroporphyrinogen decarboxylase.